A 165-amino-acid polypeptide reads, in one-letter code: Cyclic pyranopterin monophosphate synthase (165 aa).

Substrate contacts are provided by residues F83–H85 and M120–E121. D135 is a catalytic residue.

This sequence belongs to the MoaC family. In terms of assembly, homohexamer; trimer of dimers.

The enzyme catalyses (8S)-3',8-cyclo-7,8-dihydroguanosine 5'-triphosphate = cyclic pyranopterin phosphate + diphosphate. It functions in the pathway cofactor biosynthesis; molybdopterin biosynthesis. Functionally, catalyzes the conversion of (8S)-3',8-cyclo-7,8-dihydroguanosine 5'-triphosphate to cyclic pyranopterin monophosphate (cPMP). In Xanthomonas campestris pv. campestris (strain B100), this protein is Cyclic pyranopterin monophosphate synthase.